Here is a 356-residue protein sequence, read N- to C-terminus: Protein RecA (356 aa).

Position 67–74 (67–74) interacts with ATP; the sequence is GPESSGKT.

This sequence belongs to the RecA family.

It localises to the cytoplasm. In terms of biological role, can catalyze the hydrolysis of ATP in the presence of single-stranded DNA, the ATP-dependent uptake of single-stranded DNA by duplex DNA, and the ATP-dependent hybridization of homologous single-stranded DNAs. It interacts with LexA causing its activation and leading to its autocatalytic cleavage. This is Protein RecA from Yersinia pseudotuberculosis serotype I (strain IP32953).